A 337-amino-acid chain; its full sequence is Undecaprenyl-phosphate 4-deoxy-4-formamido-L-arabinose transferase (337 aa).

The next 2 helical transmembrane spans lie at 235–255 and 270–290; these read LSII…LLIV and FVLF…MGLL.

Belongs to the glycosyltransferase 2 family.

It is found in the cell inner membrane. The enzyme catalyses UDP-4-deoxy-4-formamido-beta-L-arabinose + di-trans,octa-cis-undecaprenyl phosphate = 4-deoxy-4-formamido-alpha-L-arabinopyranosyl di-trans,octa-cis-undecaprenyl phosphate + UDP. Its pathway is glycolipid biosynthesis; 4-amino-4-deoxy-alpha-L-arabinose undecaprenyl phosphate biosynthesis; 4-amino-4-deoxy-alpha-L-arabinose undecaprenyl phosphate from UDP-4-deoxy-4-formamido-beta-L-arabinose and undecaprenyl phosphate: step 1/2. The protein operates within bacterial outer membrane biogenesis; lipopolysaccharide biosynthesis. Functionally, catalyzes the transfer of 4-deoxy-4-formamido-L-arabinose from UDP to undecaprenyl phosphate. The modified arabinose is attached to lipid A and is required for resistance to polymyxin and cationic antimicrobial peptides. The sequence is that of Undecaprenyl-phosphate 4-deoxy-4-formamido-L-arabinose transferase from Pseudomonas syringae pv. syringae (strain B728a).